The following is a 196-amino-acid chain: ATP-dependent Clp protease proteolytic subunit (196 aa).

S96 acts as the Nucleophile in catalysis. The active site involves H121.

Belongs to the peptidase S14 family. In terms of assembly, fourteen ClpP subunits assemble into 2 heptameric rings which stack back to back to give a disk-like structure with a central cavity, resembling the structure of eukaryotic proteasomes.

The protein resides in the cytoplasm. It catalyses the reaction Hydrolysis of proteins to small peptides in the presence of ATP and magnesium. alpha-casein is the usual test substrate. In the absence of ATP, only oligopeptides shorter than five residues are hydrolyzed (such as succinyl-Leu-Tyr-|-NHMec, and Leu-Tyr-Leu-|-Tyr-Trp, in which cleavage of the -Tyr-|-Leu- and -Tyr-|-Trp bonds also occurs).. Cleaves peptides in various proteins in a process that requires ATP hydrolysis. Has a chymotrypsin-like activity. Plays a major role in the degradation of misfolded proteins. This Streptococcus pneumoniae (strain 70585) protein is ATP-dependent Clp protease proteolytic subunit.